A 63-amino-acid chain; its full sequence is Cecropin-B (63 aa).

A signal peptide spans 1–22 (MNFNKIFVFVALILAISLGNTE). Residue arginine 62 is modified to Arginine amide.

It belongs to the cecropin family.

Its subcellular location is the secreted. Functionally, cecropins have lytic and antibacterial activity against several Gram-positive and Gram-negative bacteria. The polypeptide is Cecropin-B (CecB) (Drosophila simulans (Fruit fly)).